The chain runs to 333 residues: Holliday junction branch migration complex subunit RuvB (333 aa).

A large ATPase domain (RuvB-L) region spans residues 4–185 (IDRLVSTDVL…FGIVQRLEFY (182 aa)). ATP-binding positions include Ile24, Arg25, Gly66, Lys69, Thr70, Thr71, 132–134 (EDY), Arg175, Tyr185, and Arg222. Residue Thr70 participates in Mg(2+) binding. Residues 186–256 (SVPDLEHIVS…IAIKALEMLN (71 aa)) are small ATPAse domain (RuvB-S). The segment at 259–333 (KEGLDYMDSK…HAYQHFICGG (75 aa)) is head domain (RuvB-H). The DNA site is built by Arg295, Arg314, and Arg319.

The protein belongs to the RuvB family. In terms of assembly, homohexamer. Forms an RuvA(8)-RuvB(12)-Holliday junction (HJ) complex. HJ DNA is sandwiched between 2 RuvA tetramers; dsDNA enters through RuvA and exits via RuvB. An RuvB hexamer assembles on each DNA strand where it exits the tetramer. Each RuvB hexamer is contacted by two RuvA subunits (via domain III) on 2 adjacent RuvB subunits; this complex drives branch migration. In the full resolvosome a probable DNA-RuvA(4)-RuvB(12)-RuvC(2) complex forms which resolves the HJ.

Its subcellular location is the cytoplasm. The catalysed reaction is ATP + H2O = ADP + phosphate + H(+). In terms of biological role, the RuvA-RuvB-RuvC complex processes Holliday junction (HJ) DNA during genetic recombination and DNA repair, while the RuvA-RuvB complex plays an important role in the rescue of blocked DNA replication forks via replication fork reversal (RFR). RuvA specifically binds to HJ cruciform DNA, conferring on it an open structure. The RuvB hexamer acts as an ATP-dependent pump, pulling dsDNA into and through the RuvAB complex. RuvB forms 2 homohexamers on either side of HJ DNA bound by 1 or 2 RuvA tetramers; 4 subunits per hexamer contact DNA at a time. Coordinated motions by a converter formed by DNA-disengaged RuvB subunits stimulates ATP hydrolysis and nucleotide exchange. Immobilization of the converter enables RuvB to convert the ATP-contained energy into a lever motion, pulling 2 nucleotides of DNA out of the RuvA tetramer per ATP hydrolyzed, thus driving DNA branch migration. The RuvB motors rotate together with the DNA substrate, which together with the progressing nucleotide cycle form the mechanistic basis for DNA recombination by continuous HJ branch migration. Branch migration allows RuvC to scan DNA until it finds its consensus sequence, where it cleaves and resolves cruciform DNA. This is Holliday junction branch migration complex subunit RuvB from Hamiltonella defensa subsp. Acyrthosiphon pisum (strain 5AT).